Here is a 376-residue protein sequence, read N- to C-terminus: Polar flagellin A (376 aa).

2 coiled-coil regions span residues 103–128 and 310–338; these read SNSK…RIAE and FQNR…IKDT.

This sequence belongs to the bacterial flagellin family. Heteromer of multiple flagellin subunits including FlaA, FlaB/D, FlaC, FlaE and FlaF.

It is found in the secreted. Its subcellular location is the bacterial flagellum. Its function is as follows. Flagellin is the subunit protein which polymerizes to form the filaments of bacterial flagella. FlaA is not essential for polar flagellar synthesis and swimming motility. Homomer of FlaA is able to form a functional filament. The protein is Polar flagellin A (flaA) of Vibrio parahaemolyticus serotype O3:K6 (strain RIMD 2210633).